The following is a 100-amino-acid chain: MSDTETKPSSDGGEKKDGEYIKLKVIGQDNSEIHFKVKMTTHLKKLKESYSQRQGVPVNSLRFLFEGQRITDNLTPKELGMEDEDVIEVYQEQTGGCRND.

One can recognise a Ubiquitin-like domain in the interval 19–96 (EYIKLKVIGQ…IEVYQEQTGG (78 aa)). Gly-96 participates in a covalent cross-link: Glycyl lysine isopeptide (Gly-Lys) (interchain with K-? in acceptor proteins). The propeptide occupies 97-100 (CRND).

This sequence belongs to the ubiquitin family. SUMO subfamily. As to quaternary structure, interacts with sae2, ube2i, ranbp2, pias1 and pias2. Covalently attached to a number of proteins. In terms of processing, cleavage of precursor form by a sentrin-specific protease is necessary for function.

The protein localises to the nucleus membrane. It localises to the nucleus speckle. Its subcellular location is the cytoplasm. The protein resides in the nucleus. It is found in the PML body. The protein localises to the cell membrane. Its function is as follows. Ubiquitin-like protein that can be covalently attached to proteins as a monomer or a lysine-linked polymer. Covalent attachment via an isopeptide bond to its substrates requires prior activation by the E1 complex sae1-sae2 and linkage to the E2 enzyme ube2i. This post-translational modification on lysine residues of proteins plays a crucial role in a number of cellular processes such as nuclear transport, DNA replication and repair, mitosis and signal transduction. Polymeric sumo1 chains are also susceptible to polyubiquitination which functions as a signal for proteasomal degradation of modified proteins. The sequence is that of Small ubiquitin-related modifier 1 (sumo1) from Danio rerio (Zebrafish).